Reading from the N-terminus, the 355-residue chain is MERGLHLGAAAASEDDLFLHKSLGTSAAKRLEAAFRSTPPGMDLSLAPPTRERPASSSSPLGCFEPADPEGAGLRLPPPGGGGGASGGGGGVSVPGLLVGSAGVGGEPSLSSLPAGAALCLKYGESAGRGSVAESSGGEQSPDDDSDGLCELVLRAGGPDPRASPRAGGGSAKVAEGCSNAHLHGGSGLPPGGPTSGGGSGGGGGGSSKKSKEQKALRLNINARERRRMHDLNDALDELRAVIPYAHSPSVRKLSKIATLLLAKNYILMQAQALEEMRRLVAYLNQGQAISAASLPSSAAAAAAAAALHPALGAYEQAAGYPFSAGLPPAASCPEKCALFNSVSSSLCKQCTEKP.

2 disordered regions span residues 34 to 90 and 128 to 215; these read AFRS…GGGG and GRGS…KEQK. Gly residues-rich tracts occupy residues 81–90 and 185–207; these read GGGGASGGGG and GGSG…GGGS. One can recognise a bHLH domain in the interval 216 to 270; it reads ALRLNINARERRRMHDLNDALDELRAVIPYAHSPSVRKLSKIATLLLAKNYILMQ.

As to quaternary structure, interacts with PRDM8. In terms of tissue distribution, brain-specific, with the highest expression in the cerebellum.

Its subcellular location is the nucleus. Inhibits DNA binding of TCF3/E47 homodimers and TCF3 (E47)/NEUROD1 heterodimers and acts as a strong repressor of Neurod1 and Myod-responsive genes, probably by heterodimerization with class a basic helix-loop-helix factors. Despite the presence of an intact basic domain, does not bind to DNA. In the brain, may function as an area-specific transcription factor that regulates the postmitotic acquisition of area identities and elucidate the genetic hierarchy between progenitors and postmitotic neurons driving neocortical arealization. May be required for the survival of a specific population of inhibitory neurons in the superficial laminae of the spinal cord dorsal horn that may regulate pruritis. Seems to play a crucial role in the retinogenesis, in the specification of amacrine and bipolar subtypes. Forms with PRDM8 a transcriptional repressor complex controlling genes involved in neural development and neuronal differentiation. This Mus musculus (Mouse) protein is Class E basic helix-loop-helix protein 22 (Bhlhe22).